The chain runs to 210 residues: Troponin I, cardiac muscle (210 aa).

The interval 1–43 is disordered; it reads MADGSSDAAREPRPAPAPIRRRSSNYRAYATEPHAKKKSKISA. Position 2 is an N-acetylalanine (A2). A phosphoserine mark is found at S5 and S6. 2 positions are modified to phosphoserine; by PKA and PKD/PRKD1: S23 and S24. The residue at position 26 (Y26) is a Phosphotyrosine. A Phosphothreonine; by STK4/MST1 modification is found at T31. Residues 32–79 are involved in binding TNC; the sequence is EPHAKKKSKISASRKLQLKTLLLQIAKQELEREAEERRGEKGRALSTR. Phosphoserine; by PKC/PRKCE occurs at positions 42 and 44. The residue at position 51 (T51) is a Phosphothreonine; by STK4/MST1. S77 carries the post-translational modification Phosphoserine. At T78 the chain carries Phosphothreonine. 2 positions are modified to phosphothreonine; by STK4/MST1: T129 and T143. The segment at 129 to 149 is involved in binding TNC and actin; sequence TQKIFDLRGKFKRPTLRRVRI. Position 150 is a phosphoserine; by PAK3 (S150). S166 is modified (phosphoserine). T181 carries the post-translational modification Phosphothreonine. S199 bears the Phosphoserine mark.

It belongs to the troponin I family. As to quaternary structure, binds to actin and tropomyosin. Interacts with TRIM63. Interacts with STK4/MST1. In terms of processing, phosphorylated at Ser-42 and Ser-44 by PRKCE; phosphorylation increases myocardium contractile dysfunction. Phosphorylated at Ser-23 and Ser-24 by PRKD1; phosphorylation reduces myofilament calcium sensitivity. Phosphorylated preferentially at Thr-31. Phosphorylation by STK4/MST1 alters its binding affinity to TNNC1 (cardiac Tn-C) and TNNT2 (cardiac Tn-T).

Its function is as follows. Troponin I is the inhibitory subunit of troponin, the thin filament regulatory complex which confers calcium-sensitivity to striated muscle actomyosin ATPase activity. This chain is Troponin I, cardiac muscle (TNNI3), found in Homo sapiens (Human).